The sequence spans 527 residues: Amine oxidase [flavin-containing] A (527 aa).

Residue M1 is modified to N-acetylmethionine. Residues 1 to 497 (MESLQKTSDA…PSFWERNLPS (497 aa)) are Cytoplasmic-facing. The residue at position 383 (S383) is a Phosphoserine. The residue at position 406 (C406) is an S-8alpha-FAD cysteine. A helical; Anchor for type IV membrane protein membrane pass occupies residues 498 to 518 (VSGLLKIVGFSTSITALWFVM). Over 519–527 (YRFRLLSRS) the chain is Mitochondrial intermembrane. The interval 520-522 (RFR) is interaction with membrane phospholipid headgroups.

The protein belongs to the flavin monoamine oxidase family. In terms of assembly, monomer, homo- or heterodimer (containing two subunits of similar size). Each subunit contains a covalently bound flavin. Enzymatically active as monomer. It depends on FAD as a cofactor.

It is found in the mitochondrion outer membrane. The enzyme catalyses a secondary aliphatic amine + O2 + H2O = a primary amine + an aldehyde + H2O2. The catalysed reaction is a primary methyl amine + O2 + H2O = an aldehyde + H2O2 + NH4(+). It carries out the reaction (R)-adrenaline + O2 + H2O = (R)-3,4-dihydroxymandelaldehyde + methylamine + H2O2. It catalyses the reaction dopamine + O2 + H2O = 3,4-dihydroxyphenylacetaldehyde + H2O2 + NH4(+). The enzyme catalyses tyramine + O2 + H2O = (4-hydroxyphenyl)acetaldehyde + H2O2 + NH4(+). The catalysed reaction is (R)-noradrenaline + O2 + H2O = (R)-3,4-dihydroxymandelaldehyde + H2O2 + NH4(+). It carries out the reaction serotonin + O2 + H2O = (5-hydroxyindol-3-yl)acetaldehyde + H2O2 + NH4(+). It catalyses the reaction kynuramine + O2 + H2O = 3-(2-aminophenyl)-3-oxopropanal + H2O2 + NH4(+). The enzyme catalyses tryptamine + O2 + H2O = indole-3-acetaldehyde + H2O2 + NH4(+). The catalysed reaction is 2-phenylethylamine + O2 + H2O = 2-phenylacetaldehyde + H2O2 + NH4(+). Functionally, catalyzes the oxidative deamination of primary and some secondary amine such as neurotransmitters, with concomitant reduction of oxygen to hydrogen peroxide and has important functions in the metabolism of neuroactive and vasoactive amines in the central nervous system and peripheral tissues. Preferentially oxidizes serotonin. Also catalyzes the oxidative deamination of kynuramine to 3-(2-aminophenyl)-3-oxopropanal that can spontaneously condense to 4-hydroxyquinoline. The protein is Amine oxidase [flavin-containing] A of Bos taurus (Bovine).